Consider the following 370-residue polypeptide: Spermidine/putrescine import ATP-binding protein PotA 1 (370 aa).

The 239-residue stretch at 12–250 (VSIRAVRKVY…PGNRFVADFI (239 aa)) folds into the ABC transporter domain. ATP is bound at residue 48 to 55 (GPSGCGKT).

The protein belongs to the ABC transporter superfamily. Spermidine/putrescine importer (TC 3.A.1.11.1) family. As to quaternary structure, the complex is composed of two ATP-binding proteins (PotA), two transmembrane proteins (PotB and PotC) and a solute-binding protein (PotD).

The protein resides in the cell inner membrane. It catalyses the reaction ATP + H2O + polyamine-[polyamine-binding protein]Side 1 = ADP + phosphate + polyamineSide 2 + [polyamine-binding protein]Side 1.. Functionally, part of the ABC transporter complex PotABCD involved in spermidine/putrescine import. Responsible for energy coupling to the transport system. This chain is Spermidine/putrescine import ATP-binding protein PotA 1, found in Pseudomonas aeruginosa (strain ATCC 15692 / DSM 22644 / CIP 104116 / JCM 14847 / LMG 12228 / 1C / PRS 101 / PAO1).